An 878-amino-acid polypeptide reads, in one-letter code: Alanine--tRNA ligase (878 aa).

Positions 570, 574, 672, and 676 each coordinate Zn(2+). Residues 844–864 (GGKGGGGRPDMAQAGGPDASA) form a disordered region. Low complexity predominate over residues 855–864 (AQAGGPDASA).

The protein belongs to the class-II aminoacyl-tRNA synthetase family. Zn(2+) is required as a cofactor.

Its subcellular location is the cytoplasm. The enzyme catalyses tRNA(Ala) + L-alanine + ATP = L-alanyl-tRNA(Ala) + AMP + diphosphate. Catalyzes the attachment of alanine to tRNA(Ala) in a two-step reaction: alanine is first activated by ATP to form Ala-AMP and then transferred to the acceptor end of tRNA(Ala). Also edits incorrectly charged Ser-tRNA(Ala) and Gly-tRNA(Ala) via its editing domain. The polypeptide is Alanine--tRNA ligase (Paramagnetospirillum magneticum (strain ATCC 700264 / AMB-1) (Magnetospirillum magneticum)).